Here is a 97-residue protein sequence, read N- to C-terminus: Large ribosomal subunit protein uL23 (97 aa).

This sequence belongs to the universal ribosomal protein uL23 family. In terms of assembly, part of the 50S ribosomal subunit. Contacts protein L29, and trigger factor when it is bound to the ribosome.

Its function is as follows. One of the early assembly proteins it binds 23S rRNA. One of the proteins that surrounds the polypeptide exit tunnel on the outside of the ribosome. Forms the main docking site for trigger factor binding to the ribosome. In Anaeromyxobacter sp. (strain Fw109-5), this protein is Large ribosomal subunit protein uL23.